Consider the following 488-residue polypeptide: ATP synthase subunit beta (488 aa).

Residue 164-171 coordinates ATP; the sequence is GGAGVGKT.

Belongs to the ATPase alpha/beta chains family. F-type ATPases have 2 components, CF(1) - the catalytic core - and CF(0) - the membrane proton channel. CF(1) has five subunits: alpha(3), beta(3), gamma(1), delta(1), epsilon(1). CF(0) has four main subunits: a(1), b(1), b'(1) and c(9-12).

The protein localises to the cellular thylakoid membrane. The catalysed reaction is ATP + H2O + 4 H(+)(in) = ADP + phosphate + 5 H(+)(out). Produces ATP from ADP in the presence of a proton gradient across the membrane. The catalytic sites are hosted primarily by the beta subunits. The sequence is that of ATP synthase subunit beta from Prochlorococcus marinus (strain SARG / CCMP1375 / SS120).